A 340-amino-acid polypeptide reads, in one-letter code: Probable protein phosphatase 2C 21 (340 aa).

The tract at residues Met1–His21 is disordered. Residues Lys24–Phe305 enclose the PPM-type phosphatase domain. Mn(2+)-binding residues include Asp58, Gly59, Asp254, and Asp296. Residues Asp311–Asp340 are disordered. The span at Ala316 to Asp340 shows a compositional bias: basic and acidic residues.

Belongs to the PP2C family. It depends on Mg(2+) as a cofactor. Requires Mn(2+) as cofactor.

The catalysed reaction is O-phospho-L-seryl-[protein] + H2O = L-seryl-[protein] + phosphate. The enzyme catalyses O-phospho-L-threonyl-[protein] + H2O = L-threonyl-[protein] + phosphate. In Oryza sativa subsp. japonica (Rice), this protein is Probable protein phosphatase 2C 21.